The chain runs to 177 residues: ATP synthase subunit delta (177 aa).

The protein belongs to the ATPase delta chain family. F-type ATPases have 2 components, F(1) - the catalytic core - and F(0) - the membrane proton channel. F(1) has five subunits: alpha(3), beta(3), gamma(1), delta(1), epsilon(1). F(0) has three main subunits: a(1), b(2) and c(10-14). The alpha and beta chains form an alternating ring which encloses part of the gamma chain. F(1) is attached to F(0) by a central stalk formed by the gamma and epsilon chains, while a peripheral stalk is formed by the delta and b chains.

It is found in the cell inner membrane. Its function is as follows. F(1)F(0) ATP synthase produces ATP from ADP in the presence of a proton or sodium gradient. F-type ATPases consist of two structural domains, F(1) containing the extramembraneous catalytic core and F(0) containing the membrane proton channel, linked together by a central stalk and a peripheral stalk. During catalysis, ATP synthesis in the catalytic domain of F(1) is coupled via a rotary mechanism of the central stalk subunits to proton translocation. This protein is part of the stalk that links CF(0) to CF(1). It either transmits conformational changes from CF(0) to CF(1) or is implicated in proton conduction. The chain is ATP synthase subunit delta from Serratia proteamaculans (strain 568).